The chain runs to 129 residues: Large ribosomal subunit protein bL12c (129 aa).

Residues 101–123 show a composition bias toward basic and acidic residues; sequence KPIKEGMSKADAEAGKKQLEEAG. Positions 101–129 are disordered; that stretch reads KPIKEGMSKADAEAGKKQLEEAGAKATLK.

It belongs to the bacterial ribosomal protein bL12 family. Homodimer. Part of the ribosomal stalk of the 50S ribosomal subunit. Forms a multimeric L10(L12)X complex, where L10 forms an elongated spine to which 2 to 4 L12 dimers bind in a sequential fashion. Binds GTP-bound translation factors.

Its subcellular location is the plastid. The protein localises to the chloroplast. Forms part of the ribosomal stalk which helps the ribosome interact with GTP-bound translation factors. Is thus essential for accurate translation. This is Large ribosomal subunit protein bL12c from Guillardia theta (Cryptophyte).